The sequence spans 736 residues: MKKNFSRIVSIVAFSSLLGGMAFAQPAERGRNPQVRLLSAEQSMSKVQFRMDNLQFTGVQTSKGVAQVPTFTEGVNISEKGTPILPILSRSLAVSETRAMKVEVVSSKFIEKKDVLIAPSKGVISRAENPDQIPYVYGQSYNEDKFFPGEIATLSDPFILRDVRGQVVNFAPLQYNPVTKTLRIYTEIVVAVSETAEAGQNTISLVKNSTFTGFEDIYKSVFMNYEATRYTPVEEKENGRMIVIVPKKYEEDIEDFVDWKNQRGLRTEVKVAEDIASPVTANAIQQFVKQEYEKEGNDLTYVLLVGDHKDIPAKITPGIKSDQVYGQIVGNDHYNEVFIGRFSCESKEDLKTQIDRTIHYERNITTEDKWLGQALCIASAEGGPSADNGESDIQHENIIANLLTQYGYTKIIKCYDPGVTPKNIIDAFNGGISLANYTGHGSETAWGTSHFGTTHVKQLTNSNQLPFIFDVACVNGDFLYNVPCFAEALMRAQKDGKPTGTVAIIASTINQSWASPMRGQDEMNEILCEKHPNNIKRTFGGVTMNGMFAMVEKYKKDGEKMLDTWTVFGDPSLLVRTLVPTKMQVTAPANISASAQTFEVACDYNGAIATLSDDGDMVGTAIVKDGKAIIKLNESIADETNLTLTVVGYNKVTVIKDVKVEGTSIADVANDKPYTVAVSGKTITVESPAAGLTIFDMNGRRVATAKNRMVFEAQNGVYAVRIATEGKTYTEKVIVK.

A signal peptide spans 1–24; that stretch reads MKKNFSRIVSIVAFSSLLGGMAFA. Residues 25-229 constitute a propeptide that is removed on maturation; that stretch reads QPAERGRNPQ…SVFMNYEATR (205 aa). Residues aspartate 307, valine 329, aspartate 332, tyrosine 334, glutamate 336, glutamate 390, and histidine 395 each contribute to the Ca(2+) site. Catalysis depends on histidine 440, which acts as the Proton donor. The active-site Nucleophile is the cysteine 473. Ca(2+) contacts are provided by phenylalanine 478, glutamate 487, aspartate 521, glutamate 522, glutamate 525, histidine 531, aspartate 613, and glutamate 639.

The protein belongs to the peptidase C25 family.

It localises to the secreted. The enzyme catalyses Hydrolysis of proteins and small molecule substrates, with a preference for Arg in P1.. With respect to regulation, inhibited by human histatin-3 1/24 (histatin-5). Its function is as follows. Thiol protease. Acts synergistically with RgpA to catalyze the maturation of fimbrial subunits, such as FimA. Its proteolytic activity is a major factor in both periodontal tissue destruction and in evasion of host defense mechanisms. The polypeptide is Gingipain R2 (rgpB) (Porphyromonas gingivalis (strain ATCC BAA-308 / W83)).